A 677-amino-acid chain; its full sequence is Methionine--tRNA ligase (677 aa).

A 'HIGH' region motif is present at residues 15 to 25 (PYANGSIHLGH). The Zn(2+) site is built by cysteine 146, cysteine 149, cysteine 159, and cysteine 162. Positions 333 to 337 (KMSKS) match the 'KMSKS' region motif. Position 336 (lysine 336) interacts with ATP. Residues 575–677 (DFAKVDLRVA…AGAKPGHQVK (103 aa)) enclose the tRNA-binding domain.

The protein belongs to the class-I aminoacyl-tRNA synthetase family. MetG type 1 subfamily. In terms of assembly, homodimer. Zn(2+) serves as cofactor.

It localises to the cytoplasm. The enzyme catalyses tRNA(Met) + L-methionine + ATP = L-methionyl-tRNA(Met) + AMP + diphosphate. Its function is as follows. Is required not only for elongation of protein synthesis but also for the initiation of all mRNA translation through initiator tRNA(fMet) aminoacylation. This is Methionine--tRNA ligase from Escherichia coli O6:K15:H31 (strain 536 / UPEC).